The chain runs to 139 residues: Large ribosomal subunit protein mL42 (139 aa).

The transit peptide at Met-1–His-32 directs the protein to the mitochondrion.

It belongs to the mitochondrion-specific ribosomal protein mL42 family. Component of the mitochondrial ribosome large subunit (39S) which comprises a 16S rRNA and about 50 distinct proteins. Component of the mitochondrial ribosome small subunit (28S) which comprises a 12S rRNA and about 30 distinct proteins.

It localises to the mitochondrion. This is Large ribosomal subunit protein mL42 (MRPL42) from Pongo abelii (Sumatran orangutan).